The primary structure comprises 968 residues: Chaperone protein ClpB3, chloroplastic (968 aa).

A chloroplast-targeting transit peptide spans 1–67; sequence MATATTTATA…RLDHRPFVVR (67 aa). The Clp R domain maps to 78–222; that stretch reads TQQEFTEMAW…KSAIESIRGK (145 aa). 2 repeat regions span residues 82 to 147 and 159 to 222; these read FTEM…IQRQ and LGRD…IRGK. Positions 237–485 are i; the sequence is LEKYGKDLTA…KLKMEITSKP (249 aa). 282–289 is a binding site for ATP; the sequence is GEPGVGKT. Positions 488-606 form a coiled coil; sequence LDELDRSVIK…NEYLSSGKSM (119 aa). Positions 611 to 802 are II; the sequence is VLGSDIAEIV…VIIMTSNVGS (192 aa). 685-692 is a binding site for ATP; it reads GPTGVGKT.

It belongs to the ClpA/ClpB family.

The protein resides in the plastid. The protein localises to the chloroplast. Its function is as follows. Molecular chaperone essential for chloroplast development and seedling viability. Mediates internal thylakoid membrane formation and confers thermotolerance to chloroplasts during heat stress. This Arabidopsis thaliana (Mouse-ear cress) protein is Chaperone protein ClpB3, chloroplastic (CLPB3).